Reading from the N-terminus, the 258-residue chain is Imidazole glycerol phosphate synthase subunit HisF (258 aa).

Active-site residues include Asp-11 and Asp-130.

It belongs to the HisA/HisF family. Heterodimer of HisH and HisF.

The protein localises to the cytoplasm. The enzyme catalyses 5-[(5-phospho-1-deoxy-D-ribulos-1-ylimino)methylamino]-1-(5-phospho-beta-D-ribosyl)imidazole-4-carboxamide + L-glutamine = D-erythro-1-(imidazol-4-yl)glycerol 3-phosphate + 5-amino-1-(5-phospho-beta-D-ribosyl)imidazole-4-carboxamide + L-glutamate + H(+). The protein operates within amino-acid biosynthesis; L-histidine biosynthesis; L-histidine from 5-phospho-alpha-D-ribose 1-diphosphate: step 5/9. Functionally, IGPS catalyzes the conversion of PRFAR and glutamine to IGP, AICAR and glutamate. The HisF subunit catalyzes the cyclization activity that produces IGP and AICAR from PRFAR using the ammonia provided by the HisH subunit. The polypeptide is Imidazole glycerol phosphate synthase subunit HisF (Methylorubrum populi (strain ATCC BAA-705 / NCIMB 13946 / BJ001) (Methylobacterium populi)).